Here is a 327-residue protein sequence, read N- to C-terminus: Acetaldehyde dehydrogenase 6 (327 aa).

An NAD(+)-binding site is contributed by 15-18; that stretch reads SGNI. The active-site Acyl-thioester intermediate is the cysteine 133. NAD(+) is bound by residues 164-172 and asparagine 297; that span reads SAGPGTRAN.

The protein belongs to the acetaldehyde dehydrogenase family.

The catalysed reaction is acetaldehyde + NAD(+) + CoA = acetyl-CoA + NADH + H(+). This is Acetaldehyde dehydrogenase 6 from Rhodococcus opacus (strain B4).